The sequence spans 43 residues: Protein PsbN (43 aa).

The chain crosses the membrane as a helical span at residues 5–27; the sequence is TLVAISISCLLVSFTGYALYTAF.

The protein belongs to the PsbN family.

Its subcellular location is the plastid. The protein localises to the chloroplast thylakoid membrane. In terms of biological role, may play a role in photosystem I and II biogenesis. This chain is Protein PsbN, found in Cedrus deodara (Deodar cedar).